A 177-amino-acid chain; its full sequence is MGDPKKSRRKWEGPGHPWIRINLEKEQVLIGKYGLRNKRELWLAQTIIRKFRHQARSLLALPPAERSTREKQLIQKLYRMGIIEKDNATLDDILGLNEENYLERRLQTIVYKKGLARTIYQARQLIVHGHIAIGGRRVTSPGYIVMRGEEDLIDFYPTSPFKQHPPTQQGEENVQQA.

The 63-residue stretch at 104–166 (RRLQTIVYKK…PTSPFKQHPP (63 aa)) folds into the S4 RNA-binding domain. The disordered stretch occupies residues 158 to 177 (TSPFKQHPPTQQGEENVQQA). Residues 165–177 (PPTQQGEENVQQA) show a composition bias toward polar residues.

It belongs to the universal ribosomal protein uS4 family. In terms of assembly, part of the 30S ribosomal subunit. Contacts protein S5. The interaction surface between S4 and S5 is involved in control of translational fidelity.

Its function is as follows. One of the primary rRNA binding proteins, it binds directly to 16S rRNA where it nucleates assembly of the body of the 30S subunit. In terms of biological role, with S5 and S12 plays an important role in translational accuracy. This chain is Small ribosomal subunit protein uS4, found in Sulfurisphaera tokodaii (strain DSM 16993 / JCM 10545 / NBRC 100140 / 7) (Sulfolobus tokodaii).